The sequence spans 366 residues: Histidinol-phosphate aminotransferase (366 aa).

K227 is subject to N6-(pyridoxal phosphate)lysine.

Belongs to the class-II pyridoxal-phosphate-dependent aminotransferase family. Histidinol-phosphate aminotransferase subfamily. As to quaternary structure, homodimer. The cofactor is pyridoxal 5'-phosphate.

The catalysed reaction is L-histidinol phosphate + 2-oxoglutarate = 3-(imidazol-4-yl)-2-oxopropyl phosphate + L-glutamate. It functions in the pathway amino-acid biosynthesis; L-histidine biosynthesis; L-histidine from 5-phospho-alpha-D-ribose 1-diphosphate: step 7/9. This Campylobacter hominis (strain ATCC BAA-381 / DSM 21671 / CCUG 45161 / LMG 19568 / NCTC 13146 / CH001A) protein is Histidinol-phosphate aminotransferase.